Consider the following 844-residue polypeptide: Beta-mannosidase B (844 aa).

Glutamate 432 (proton donor) is an active-site residue. Asparagine 723 carries an N-linked (GlcNAc...) asparagine glycan.

The protein belongs to the glycosyl hydrolase 2 family. Beta-mannosidase B subfamily.

The enzyme catalyses Hydrolysis of terminal, non-reducing beta-D-mannose residues in beta-D-mannosides.. Its pathway is glycan metabolism; N-glycan degradation. Exoglycosidase that cleaves the single beta-linked mannose residue from the non-reducing end of beta-mannosidic oligosaccharides of various complexity and length. Prefers mannobiose over mannotriose and has no activity against polymeric mannan. Is also severely restricted by galactosyl substitutions at the +1 subsite. This is Beta-mannosidase B (mndB) from Aspergillus flavus (strain ATCC 200026 / FGSC A1120 / IAM 13836 / NRRL 3357 / JCM 12722 / SRRC 167).